A 383-amino-acid polypeptide reads, in one-letter code: Glucose-1-phosphate adenylyltransferase (383 aa).

Residues Tyr-100, Gly-165, 180–181 (EK), and Ser-191 contribute to the alpha-D-glucose 1-phosphate site.

It belongs to the bacterial/plant glucose-1-phosphate adenylyltransferase family. As to quaternary structure, homotetramer.

The enzyme catalyses alpha-D-glucose 1-phosphate + ATP + H(+) = ADP-alpha-D-glucose + diphosphate. It functions in the pathway glycan biosynthesis; glycogen biosynthesis. Functionally, involved in the biosynthesis of ADP-glucose, a building block required for the elongation reactions to produce glycogen. Catalyzes the reaction between ATP and alpha-D-glucose 1-phosphate (G1P) to produce pyrophosphate and ADP-Glc. The chain is Glucose-1-phosphate adenylyltransferase from Clostridium kluyveri (strain ATCC 8527 / DSM 555 / NBRC 12016 / NCIMB 10680 / K1).